Consider the following 2031-residue polypeptide: MATGGGPPDEALSDQDLPNWSHESLDDRLNNMHWNGQKKGNRSAEKNKKKFVECDLRLTNDISPESSPGVGRRRARTPHTFPHTRYVSQMSVPEQAELEKLKQKINFSDLDQRSIGSDSQGRATAANNKRQLADNRKPFNFLPSQLNTNKEKSKSPPKREASTRSLTKDFLASALNKDFLSNSQAFLEEESKREPAIDSSQVVSRLVQIRDYITKASSLRDDLVQKKDLSVNVERLSNLIEHLKFQEKSYLKFLQKMLASENEEEDVRTVDSAVGSGSVVESTLLTFDVPSEASDTTGVDPRQEAKEELKNMKKQHALLTRMLQQQEQLRTLKGRQAALLALQHKAEQAIAKMDESVVTETTGSVSGLSLTSELNEELNDLIQRFHNQLHDSEDPPAPDNRRQAESLSLAREVYRSRNSSTSDTPLEDKSPLFNNVGVLLEKKQKMDTLLGELHTLQDQQLNNTAFVASSVSPRRSTEQRTLGSAVSSALTSDNRAARSPVTIGAYQTASVNESEDEENQNPAEKLKKLKEVRKRLNELRELVHYYEQTSDMMTDAMNENTKDEDETEDSEYDSEQEDAEPTTNIRNPQYRSSWAQMNINSNNQSGTNNRDERQLNTECEINNRSAVNLRSFNMPSALDCLYNIEHSDKEEDGNRELDDEDAEDQGSRASLSSQNSVADDVQSVDFEQKFNRLVAAKQKLKQLQDLVAMYGDDSESEPVAPERSFSGDQFPPEATTLKQQPNNTRPNVSKAQKDIALKEQAREKFYESKLQQQQRELSQLQEERKKLIEIQEKIQTLRKACPDLQLSTSSAGTNPANRQNRQMTTTTSTPDVNTNGNIVVPAMPDPEDSSSVDNEVWSEIRKHQILREDLRQRRKQLETLMAEHQRRQGNTETTSAASIRSDDSDTQGLQQQTRTEKTMATWGGSTQCALEEEEEEEEVDDEECLSDVHQIDIEEDEQDNTSCENNSYPQNSIRKTSFNGRSSKDGWKNQCPLSVEGNHRPSPKTRQQQNVSMRRQENYRWMSELSHVEEKEHWQEQIDQIKKQLDYSTSICQTLMRDQQALSYLLQSMITTPYSVMPSNVGASQVQLIMHQLNQCYTQLNWQQSNVLRLKQMLNDLLVQQPQHLQGESHQREDRGSSAPPLTSPNIFPNFSFLPPTMNLLNMPAFGSIPNVVPGMNFNPVFPHGFENFTQNVASHTDTPLQPHDQNTSGKTEYMAFPKPFESHRSNSTEKERNPPKKPDESEQGRRVWVENHQKSDQEKKPACFGAGLSAGGASAKLAEESRKVKQFDEVSVESLSSMPDPVDPTTVTKMFKSRKASAQASLASKDKTPKAKNKKRKVFHQKSKGIKSCGFQAASASSASEPNQTTCKHAQTEEVVVGNVIKTSSAQRVEKESKATEMSSEAGSDVSMFETLRDTIYSEVATLISQNESRPHFLIELFHELQLLNTDYLRQKALFALQDIVTRHVSEGNAKKHETCTKALESTGWMASTSELTPSESLVTTDDEMYAKNSDGPVCQEGEQNDGDNISSLSTSSNFEPFATDDLGNTVIHFDQALARMREYERMKSETENGLVADCCNNLNAAASSLEGTNDEARGRAQHSVDDASGIPCPYIDSKQLDRQIKAIMKEVIPFLKEHMEEVCSPNLLTSIRRLVLTLTQQNDESKEFVKFFHKQLGSILQDSLAKFSSKKLKDCGEDLLVEISEVLFNELAFFRLMQDLDNNSTAVQGTVSRKPEAVVVLESFTKEADKEEKTCPEENFSATRETDDEDKDKDETETAEENRNFDAEVLSGKSDISEEDDLDESLPVSISFTKAETQALTNYGSGEDENEDEENYEFEARPVDVQTSLETSSEIADETEKEEMEVRPEANIENEKALSLAVNVMGELSIHEDQAKSDCDVLAHPSLLLSNEKATDFSGTALVNNVKSPVDSPGTSGAGSSDTESPVLVNDFETGSGNLSQKSDEDDFVKVEDLPLKLSLPQEQIMKDIEEEENKNNLCDEILNINDEENGADQLAGDPLALKEPDSPAIHPA.

Disordered regions lie at residues 1-82 (MATG…HTFP) and 111-165 (DQRS…STRS). Positions 1 to 484 (MATGGGPPDE…RSTEQRTLGS (484 aa)) are self-association. Residues 42–58 (RSAEKNKKKFVECDLRL) show a composition bias toward basic and acidic residues. Positions 114-130 (SIGSDSQGRATAANNKR) are enriched in polar residues. Positions 149-162 (NKEKSKSPPKREAS) are enriched in basic and acidic residues. Residues 302 to 394 (RQEAKEELKN…FHNQLHDSED (93 aa)) are a coiled coil. Residues 469-494 (SSVSPRRSTEQRTLGSAVSSALTSDN) show a composition bias toward polar residues. The tract at residues 469–495 (SSVSPRRSTEQRTLGSAVSSALTSDNR) is disordered. A coiled-coil region spans residues 523–549 (AEKLKKLKEVRKRLNELRELVHYYEQT). Disordered stretches follow at residues 550-590 (SDMM…NPQY) and 649-678 (KEED…NSVA). Residues 562-580 (KDEDETEDSEYDSEQEDAE) are compositionally biased toward acidic residues. Polar residues-rich tracts occupy residues 581 to 590 (PTTNIRNPQY) and 667 to 677 (SRASLSSQNSV). A coiled-coil region spans residues 684–711 (VDFEQKFNRLVAAKQKLKQLQDLVAMYG). The interval 712 to 752 (DDSESEPVAPERSFSGDQFPPEATTLKQQPNNTRPNVSKAQ) is disordered. Residues 736 to 750 (TLKQQPNNTRPNVSK) show a composition bias toward polar residues. The self-association and localization to centrosomes stretch occupies residues 745–1271 (RPNVSKAQKD…PACFGAGLSA (527 aa)). The stretch at 757–805 (LKEQAREKFYESKLQQQQRELSQLQEERKKLIEIQEKIQTLRKACPDLQ) forms a coiled coil. 2 stretches are compositionally biased toward polar residues: residues 806–823 (LSTS…NRQM) and 888–898 (QGNTETTSAAS). 2 disordered regions span residues 806–835 (LSTS…VNTN) and 882–1014 (AEHQ…VSMR). A coiled-coil region spans residues 858 to 892 (SEIRKHQILREDLRQRRKQLETLMAEHQRRQGNTE). Residues 930 to 945 (LEEEEEEEEVDDEECL) are compositionally biased toward acidic residues. Composition is skewed to polar residues over residues 960–981 (NTSC…FNGR) and 1004–1013 (KTRQQQNVSM). Residues 1025 to 1049 (LSHVEEKEHWQEQIDQIKKQLDYST) are a coiled coil. 4 disordered regions span residues 1123 to 1146 (QHLQ…TSPN), 1219 to 1247 (KPFE…QGRR), 1318 to 1345 (SAQA…QKSK), and 1514 to 1533 (PVCQ…LSTS). 2 stretches are compositionally biased toward basic and acidic residues: residues 1127–1136 (GESHQREDRG) and 1221–1247 (FESH…QGRR). Residues 1331 to 1345 (KAKNKKRKVFHQKSK) show a composition bias toward basic residues. Residues 1524-1533 (GDNISSLSTS) are compositionally biased toward polar residues. Positions 1550–1599 (HFDQALARMREYERMKSETENGLVADCCNNLNAAASSLEGTNDEARGRAQ) form a coiled coil. Disordered regions lie at residues 1746-1802 (ADKE…DLDE), 1817-1870 (ALTN…EANI), 1922-1965 (NNVK…DEDD), and 2007-2031 (ENGA…IHPA). Basic and acidic residues predominate over residues 1771-1784 (KDETETAEENRNFD). The segment covering 1824-1835 (GEDENEDEENYE) has biased composition (acidic residues). Composition is skewed to polar residues over residues 1843–1852 (VQTSLETSSE) and 1922–1942 (NNVK…SDTE).

Belongs to the PCM1 family. In terms of assembly, self-associates. Interacts with cetn3.

Its subcellular location is the cytoplasm. The protein localises to the cytoskeleton. It localises to the microtubule organizing center. The protein resides in the centrosome. It is found in the cytoplasmic granule. Its subcellular location is the centriolar satellite. The protein localises to the cilium basal body. Its function is as follows. Required to anchor microtubules to the centrosome. Required for centrosome assembly and function. Essential for the correct localization of several centrosomal proteins including cetn3 and pcnt. Probably involved in the biogenesis of cilia. This chain is Pericentriolar material 1 protein (pcm1), found in Xenopus laevis (African clawed frog).